Reading from the N-terminus, the 40-residue chain is Photosystem II reaction center protein J (40 aa).

The helical transmembrane segment at Ile-8–Phe-28 threads the bilayer.

This sequence belongs to the PsbJ family. In terms of assembly, PSII is composed of 1 copy each of membrane proteins PsbA, PsbB, PsbC, PsbD, PsbE, PsbF, PsbH, PsbI, PsbJ, PsbK, PsbL, PsbM, PsbT, PsbX, PsbY, PsbZ, Psb30/Ycf12, at least 3 peripheral proteins of the oxygen-evolving complex and a large number of cofactors. It forms dimeric complexes.

It is found in the plastid. Its subcellular location is the chloroplast thylakoid membrane. Its function is as follows. One of the components of the core complex of photosystem II (PSII). PSII is a light-driven water:plastoquinone oxidoreductase that uses light energy to abstract electrons from H(2)O, generating O(2) and a proton gradient subsequently used for ATP formation. It consists of a core antenna complex that captures photons, and an electron transfer chain that converts photonic excitation into a charge separation. This is Photosystem II reaction center protein J from Physcomitrium patens (Spreading-leaved earth moss).